We begin with the raw amino-acid sequence, 218 residues long: Glutathione S-transferase-like protein OpS6 (218 aa).

Residues 5–86 (QPIKLYAHKK…YLIEQYDKDG (82 aa)) enclose the GST N-terminal domain. Positions 92-218 (SLQDKSLARA…KIAATKAALA (127 aa)) constitute a GST C-terminal domain.

It belongs to the GST superfamily.

Its pathway is secondary metabolite biosynthesis. In terms of biological role, glutathione S-transferase-like protein; part of the gene cluster that mediates the biosynthesis of the bibenzoquinone oosporein, a metabolite required for fungal virulence that acts by evading host immunity to facilitate fungal multiplication in insects. The non-reducing polyketide synthase OpS1 produces orsellinic acid by condensing acetyl-CoA with 3 malonyl-CoA units. Orsellinic acid is then hydroxylated to benzenetriol by the hydroxylase OpS4. The intermediate is oxidized either nonenzymatically to 5,5'-dideoxy-oosporein or enzymatically to benzenetetrol by the oxidoreductase OpS7. The latter is further dimerized to oosporein by the catalase OpS5. OpS6 probably functions en route for protecting cells against oxidative stress by scavenging any leaked free radical form of benzenetetrol by activating the thiol group of glutathione. The sequence is that of Glutathione S-transferase-like protein OpS6 from Beauveria bassiana (strain ARSEF 2860) (White muscardine disease fungus).